A 53-amino-acid chain; its full sequence is Mannose/glucose-specific lectin alpha 2 chain (53 aa).

This sequence belongs to the leguminous lectin family. In terms of assembly, tetramer of two alpha and two beta chains.

The protein is Mannose/glucose-specific lectin alpha 2 chain of Lathyrus ochrus (Cyprus-vetch).